A 250-amino-acid chain; its full sequence is Aquaporin TIP1-1 (250 aa).

A run of 2 helical transmembrane segments spans residues 24–44 and 56–76; these read FAEFISTLIFVFAGQGSGMAF and AGLIAAAVAHAFALFVAVSVG. The short motif at 85–87 is the NPA 1 element; it reads NPA. 3 consecutive transmembrane segments (helical) span residues 104 to 126, 143 to 163, and 172 to 192; these read LLYWVAQLLGSTVACFLLRFSTG, ALVLEIVMTFGLVYTVYATAV, and TIAPIAIGFIVGANILVGGAF. Positions 198–200 match the NPA 2 motif; the sequence is NPA. Residues 218 to 238 form a helical membrane-spanning segment; it reads YWVGPLIGGGLAGVIYELLFI.

Belongs to the MIP/aquaporin (TC 1.A.8) family. TIP (TC 1.A.8.10) subfamily. In terms of tissue distribution, expressed in roots, shoots, leaves, tassels, ears and embryos. Expressed in meristems and zones of cell enlargement: tips of primary and lateral roots, leaf primordia, and male and female inflorescence meristems. Highly expressed in the root epidermis and endodermis, parenchyma cells surrounding mature xylem vessels in the root and the stem, phloem companion cells and a ring of cells around the phloem strand in the stem and the leaf sheath, and the basal endosperm transfer cells in developing kernels.

The protein localises to the vacuole membrane. Its function is as follows. Water channel required to facilitate the transport of water across cell membrane. May support the rapid influx of water into vacuoles during cell expansion, permit osmotic equilibration between the cytosol and the vacuolar content and rapid transcellular water flow through living cells. Its function is impaired by Hg(2+). The chain is Aquaporin TIP1-1 (TIP1-1) from Zea mays (Maize).